The sequence spans 293 residues: 4-hydroxy-tetrahydrodipicolinate synthase (293 aa).

Position 47 (threonine 47) interacts with pyruvate. Catalysis depends on tyrosine 136, which acts as the Proton donor/acceptor. The active-site Schiff-base intermediate with substrate is the lysine 164. Isoleucine 206 is a binding site for pyruvate.

The protein belongs to the DapA family. Homotetramer; dimer of dimers.

The protein localises to the cytoplasm. The enzyme catalyses L-aspartate 4-semialdehyde + pyruvate = (2S,4S)-4-hydroxy-2,3,4,5-tetrahydrodipicolinate + H2O + H(+). It participates in amino-acid biosynthesis; L-lysine biosynthesis via DAP pathway; (S)-tetrahydrodipicolinate from L-aspartate: step 3/4. Its function is as follows. Catalyzes the condensation of (S)-aspartate-beta-semialdehyde [(S)-ASA] and pyruvate to 4-hydroxy-tetrahydrodipicolinate (HTPA). The polypeptide is 4-hydroxy-tetrahydrodipicolinate synthase (Listeria welshimeri serovar 6b (strain ATCC 35897 / DSM 20650 / CCUG 15529 / CIP 8149 / NCTC 11857 / SLCC 5334 / V8)).